The primary structure comprises 157 residues: Small ribosomal subunit protein uS7 (157 aa).

It belongs to the universal ribosomal protein uS7 family. As to quaternary structure, part of the 30S ribosomal subunit. Contacts proteins S9 and S11.

Functionally, one of the primary rRNA binding proteins, it binds directly to 16S rRNA where it nucleates assembly of the head domain of the 30S subunit. Is located at the subunit interface close to the decoding center, probably blocks exit of the E-site tRNA. This chain is Small ribosomal subunit protein uS7, found in Hydrogenovibrio crunogenus (strain DSM 25203 / XCL-2) (Thiomicrospira crunogena).